The chain runs to 380 residues: tRNA-specific 2-thiouridylase MnmA (380 aa).

Residues 25 to 32 and M51 contribute to the ATP site; that span reads AMSGGVDS. C119 acts as the Nucleophile in catalysis. Cysteines 119 and 216 form a disulfide. G143 serves as a coordination point for ATP. Residues 166-168 are interaction with tRNA; sequence KDQ. C216 (cysteine persulfide intermediate) is an active-site residue. The tract at residues 320 to 321 is interaction with tRNA; sequence RY.

Belongs to the MnmA/TRMU family.

The protein localises to the cytoplasm. It carries out the reaction S-sulfanyl-L-cysteinyl-[protein] + uridine(34) in tRNA + AH2 + ATP = 2-thiouridine(34) in tRNA + L-cysteinyl-[protein] + A + AMP + diphosphate + H(+). In terms of biological role, catalyzes the 2-thiolation of uridine at the wobble position (U34) of tRNA, leading to the formation of s(2)U34. This Deinococcus radiodurans (strain ATCC 13939 / DSM 20539 / JCM 16871 / CCUG 27074 / LMG 4051 / NBRC 15346 / NCIMB 9279 / VKM B-1422 / R1) protein is tRNA-specific 2-thiouridylase MnmA.